The sequence spans 117 residues: DNA-directed RNA polymerase subunit omega (117 aa).

The segment covering 96–105 has biased composition (basic and acidic residues); sequence KEEAEEEAKQ. Residues 96–117 form a disordered region; the sequence is KEEAEEEAKQKNSRAAKAAAAE. Residues 108-117 show a composition bias toward low complexity; sequence SRAAKAAAAE.

Belongs to the RNA polymerase subunit omega family. In terms of assembly, the RNAP catalytic core consists of 2 alpha, 1 beta, 1 beta' and 1 omega subunit. When a sigma factor is associated with the core the holoenzyme is formed, which can initiate transcription.

It carries out the reaction RNA(n) + a ribonucleoside 5'-triphosphate = RNA(n+1) + diphosphate. Its function is as follows. Promotes RNA polymerase assembly. Latches the N- and C-terminal regions of the beta' subunit thereby facilitating its interaction with the beta and alpha subunits. The polypeptide is DNA-directed RNA polymerase subunit omega (rpoZ) (Lactococcus lactis subsp. lactis (strain IL1403) (Streptococcus lactis)).